We begin with the raw amino-acid sequence, 286 residues long: Thymidylate synthase (286 aa).

Position 21 (R21) interacts with dUMP. (6R)-5,10-methylene-5,6,7,8-tetrahydrofolate is bound at residue N51. A dUMP-binding site is contributed by 150–151 (RR). The active-site Nucleophile is the C170. DUMP-binding positions include 190-193 (RSAD), N201, and 231-233 (HIY). (6R)-5,10-methylene-5,6,7,8-tetrahydrofolate is bound at residue D193. A285 lines the (6R)-5,10-methylene-5,6,7,8-tetrahydrofolate pocket.

This sequence belongs to the thymidylate synthase family. Bacterial-type ThyA subfamily. As to quaternary structure, homodimer.

It localises to the cytoplasm. The enzyme catalyses dUMP + (6R)-5,10-methylene-5,6,7,8-tetrahydrofolate = 7,8-dihydrofolate + dTMP. The protein operates within pyrimidine metabolism; dTTP biosynthesis. Catalyzes the reductive methylation of 2'-deoxyuridine-5'-monophosphate (dUMP) to 2'-deoxythymidine-5'-monophosphate (dTMP) while utilizing 5,10-methylenetetrahydrofolate (mTHF) as the methyl donor and reductant in the reaction, yielding dihydrofolate (DHF) as a by-product. This enzymatic reaction provides an intracellular de novo source of dTMP, an essential precursor for DNA biosynthesis. This Mycoplasmopsis pulmonis (strain UAB CTIP) (Mycoplasma pulmonis) protein is Thymidylate synthase.